The sequence spans 498 residues: Succinate-semialdehyde dehydrogenase [NADP(+)] 1 (498 aa).

247-252 (GSTNVG) is an NAD(+) binding site. Residues glutamate 269 and cysteine 303 contribute to the active site.

Belongs to the aldehyde dehydrogenase family. As to quaternary structure, homotetramer.

Its subcellular location is the cytoplasm. The catalysed reaction is succinate semialdehyde + NAD(+) + H2O = succinate + NADH + 2 H(+). It carries out the reaction succinate semialdehyde + NADP(+) + H2O = succinate + NADPH + 2 H(+). It participates in amino-acid degradation; 4-aminobutanoate degradation. Its function is as follows. Catalyzes the oxidation of succinate semialdehyde to succinate. Can utilize both NAD(+) or NADP(+) as a coenzyme. Functions in a gamma-aminobutyrate (GABA) degradation pathway that allows growth utilizing GABA as a nitrogen source. Functions in the GABA shunt, which allows to bypass 2 reactions in the TCA cycle by removing alpha-ketoglutarate from the cycle and feeding succinate and NADH back into the cycle. The polypeptide is Succinate-semialdehyde dehydrogenase [NADP(+)] 1 (ssd1) (Schizosaccharomyces pombe (strain 972 / ATCC 24843) (Fission yeast)).